We begin with the raw amino-acid sequence, 333 residues long: Phosphoribosylformylglycinamidine cyclo-ligase (333 aa).

It belongs to the AIR synthase family.

Its subcellular location is the cytoplasm. The enzyme catalyses 2-formamido-N(1)-(5-O-phospho-beta-D-ribosyl)acetamidine + ATP = 5-amino-1-(5-phospho-beta-D-ribosyl)imidazole + ADP + phosphate + H(+). It participates in purine metabolism; IMP biosynthesis via de novo pathway; 5-amino-1-(5-phospho-D-ribosyl)imidazole from N(2)-formyl-N(1)-(5-phospho-D-ribosyl)glycinamide: step 2/2. In Methanosarcina mazei (strain ATCC BAA-159 / DSM 3647 / Goe1 / Go1 / JCM 11833 / OCM 88) (Methanosarcina frisia), this protein is Phosphoribosylformylglycinamidine cyclo-ligase.